Here is a 228-residue protein sequence, read N- to C-terminus: Cytochrome c oxidase subunit 2 (228 aa).

At 1-14 (MAYPFQLGFQDATS) the chain is on the mitochondrial intermembrane side. A helical transmembrane segment spans residues 15–45 (PIMEELLHFHDHTLMIVFLISSLVLYIISLM). Over 46 to 59 (LTTKLTHTSTMDAQ) the chain is Mitochondrial matrix. A helical membrane pass occupies residues 60–87 (EVETIWTILPAIILILIALPSLRILYMM). Residues 88 to 228 (DEINNPALTV…FEKWSTSMLT (141 aa)) lie on the Mitochondrial intermembrane side of the membrane. His-161, Cys-196, Glu-198, Cys-200, His-204, and Met-207 together coordinate Cu cation. Glu-198 is a binding site for Mg(2+). Tyr-218 carries the post-translational modification Phosphotyrosine.

This sequence belongs to the cytochrome c oxidase subunit 2 family. As to quaternary structure, component of the cytochrome c oxidase (complex IV, CIV), a multisubunit enzyme composed of 14 subunits. The complex is composed of a catalytic core of 3 subunits MT-CO1, MT-CO2 and MT-CO3, encoded in the mitochondrial DNA, and 11 supernumerary subunits COX4I, COX5A, COX5B, COX6A, COX6B, COX6C, COX7A, COX7B, COX7C, COX8 and NDUFA4, which are encoded in the nuclear genome. The complex exists as a monomer or a dimer and forms supercomplexes (SCs) in the inner mitochondrial membrane with NADH-ubiquinone oxidoreductase (complex I, CI) and ubiquinol-cytochrome c oxidoreductase (cytochrome b-c1 complex, complex III, CIII), resulting in different assemblies (supercomplex SCI(1)III(2)IV(1) and megacomplex MCI(2)III(2)IV(2)). Found in a complex with TMEM177, COA6, COX18, COX20, SCO1 and SCO2. Interacts with TMEM177 in a COX20-dependent manner. Interacts with COX20. Interacts with COX16. The cofactor is Cu cation.

It localises to the mitochondrion inner membrane. The enzyme catalyses 4 Fe(II)-[cytochrome c] + O2 + 8 H(+)(in) = 4 Fe(III)-[cytochrome c] + 2 H2O + 4 H(+)(out). Functionally, component of the cytochrome c oxidase, the last enzyme in the mitochondrial electron transport chain which drives oxidative phosphorylation. The respiratory chain contains 3 multisubunit complexes succinate dehydrogenase (complex II, CII), ubiquinol-cytochrome c oxidoreductase (cytochrome b-c1 complex, complex III, CIII) and cytochrome c oxidase (complex IV, CIV), that cooperate to transfer electrons derived from NADH and succinate to molecular oxygen, creating an electrochemical gradient over the inner membrane that drives transmembrane transport and the ATP synthase. Cytochrome c oxidase is the component of the respiratory chain that catalyzes the reduction of oxygen to water. Electrons originating from reduced cytochrome c in the intermembrane space (IMS) are transferred via the dinuclear copper A center (CU(A)) of subunit 2 and heme A of subunit 1 to the active site in subunit 1, a binuclear center (BNC) formed by heme A3 and copper B (CU(B)). The BNC reduces molecular oxygen to 2 water molecules using 4 electrons from cytochrome c in the IMS and 4 protons from the mitochondrial matrix. The protein is Cytochrome c oxidase subunit 2 (MT-CO2) of Sus scrofa (Pig).